We begin with the raw amino-acid sequence, 130 residues long: Small ribosomal subunit protein uS9 (130 aa).

This sequence belongs to the universal ribosomal protein uS9 family.

The polypeptide is Small ribosomal subunit protein uS9 (Shewanella halifaxensis (strain HAW-EB4)).